Consider the following 707-residue polypeptide: E3 ubiquitin-protein ligase Praja-2 (707 aa).

Over residues 1 to 10 (MSQYTEKEPS) the composition is skewed to basic and acidic residues. Disordered stretches follow at residues 1 to 32 (MSQY…QTIT), 72 to 120 (PKEN…PSIA), and 250 to 314 (QNGQ…VRPK). The residue at position 2 (Ser-2) is an N-acetylserine. Composition is skewed to polar residues over residues 74 to 83 (ENTSGSSSLD) and 109 to 119 (LNQSTESSPSI). Basic and acidic residues predominate over residues 257–276 (RSSEDGVVRKRRQDDTDQGR). Positions 293 to 308 (EQNTSDRANHHGSSPE) are enriched in polar residues. Phosphoserine is present on residues Ser-306 and Ser-320. The residue at position 339 (Ser-339) is a Phosphoserine; by PKA. 2 disordered regions span residues 379–405 (RVTQ…QESR) and 424–493 (EDSS…QTSL). The segment covering 381–390 (TQRETERNRV) has biased composition (basic and acidic residues). Phosphothreonine; by PKA is present on Thr-385. The span at 391–401 (TSENGATASGR) shows a compositional bias: polar residues. Ser-430 is modified (phosphoserine). Residues 465-481 (NDPELQSDSSGPEEENQ) are compositionally biased toward acidic residues. A compositionally biased stretch (polar residues) spans 482-491 (ELSLQEGEQT). An interaction with PRKAR1A, PRKAR2A and PRKAR2B region spans residues 530 to 707 (DGNNNLEDDS…PANDNAEEAP (178 aa)). Residues 549-569 (WSLFDGFADGLGVAEAISYVD) are mediates interaction with TBC1D31. Residues 633 to 674 (CPICCSEYIKDDIATELPCHHFFHKPCVSIWLQKSGTCPVCR) form an RING-type; atypical zinc finger. Residues 685–701 (SAAASSDPDPDASPAND) show a composition bias toward low complexity. The interval 685–707 (SAAASSDPDPDASPANDNAEEAP) is disordered.

Binds ubiquitin-conjugating enzymes (E2s). In vitro, interacts with the ubiquitin-conjugating enzyme, UBE2D2. The phosphorylated form interacts with PRKAR1A, PRKAR2A and PRKAR2B. Binds the catalytic subunits of cAMP-dependent protein kinase. Interacts with MFHAS1. Interacts with TBC1D31; the interaction is direct and recruits PJA2 to centrosomes.

The protein localises to the cytoplasm. Its subcellular location is the cell membrane. It is found in the endoplasmic reticulum membrane. It localises to the golgi apparatus membrane. The protein resides in the synapse. The protein localises to the postsynaptic density. Its subcellular location is the cytoskeleton. It is found in the microtubule organizing center. It localises to the centrosome. The enzyme catalyses S-ubiquitinyl-[E2 ubiquitin-conjugating enzyme]-L-cysteine + [acceptor protein]-L-lysine = [E2 ubiquitin-conjugating enzyme]-L-cysteine + N(6)-ubiquitinyl-[acceptor protein]-L-lysine.. It participates in protein modification; protein ubiquitination. Has E2-dependent E3 ubiquitin-protein ligase activity. Responsible for ubiquitination of cAMP-dependent protein kinase type I and type II-alpha/beta regulatory subunits and for targeting them for proteasomal degradation. Essential for PKA-mediated long-term memory processes. Through the ubiquitination of MFHAS1, positively regulates the TLR2 signaling pathway that leads to the activation of the downstream p38 and JNK MAP kinases and promotes the polarization of macrophages toward the pro-inflammatory M1 phenotype. Plays a role in ciliogenesis by ubiquitinating OFD1. In Mus musculus (Mouse), this protein is E3 ubiquitin-protein ligase Praja-2 (Pja2).